The following is a 143-amino-acid chain: Transcriptional regulator MraZ (143 aa).

SpoVT-AbrB domains are found at residues 5-47 (EYQH…PMHE) and 76-119 (ATEC…SKVI).

It belongs to the MraZ family. In terms of assembly, forms oligomers.

The protein resides in the cytoplasm. The protein localises to the nucleoid. The sequence is that of Transcriptional regulator MraZ from Bacillus subtilis (strain 168).